Consider the following 232-residue polypeptide: Histone H1.X (232 aa).

In terms of domain architecture, H15 spans 36–112 (HHPSYMDMIK…GATGSFRMGK (77 aa)). A disordered region spans residues 142–232 (ISKAEKTKPS…LRTGTRKSYC (91 aa)). Basic residues predominate over residues 159 to 197 (KKGKPISTMKKRGVMSKKRSSKNKMAPKAKSHGLKKKGP).

Belongs to the histone H1/H5 family.

The protein localises to the nucleus. It is found in the chromosome. This chain is Histone H1.X (hil-1), found in Caenorhabditis elegans.